The following is a 661-amino-acid chain: Pentatricopeptide repeat-containing protein At3g04750, mitochondrial (661 aa).

The N-terminal 18 residues, 1 to 18, are a transit peptide targeting the mitochondrion; sequence MCFVLLLRRGFRLFGTEC. PPR repeat units follow at residues 99–131, 132–163, 165–195, 196–230, 231–265, 268–298, 299–333, 334–366, 367–401, 402–432, 433–467, 468–498, and 504–539; these read NVFVYNTMISAVSSSKNECFGLYSSMIRHRVSP, DRQTFLYLMKASSFLSEVKQIHCHIIVSGCLS, GNYLWNSLVKFYMELGNFGVAEKVFARMPHP, DVSSFNVMIVGYAKQGFSLEALKLYFKMVSDGIEP, DEYTVLSLLVCCGHLSDIRLGKGVHGWIERRGPVY, NLILSNALLDMYFKCKESGLAKRAFDAMKKK, DMRSWNTMVVGFVRLGDMEAAQAVFDQMPKRDLVS, WNSLLFGYSKKGCDQRTVRELFYEMTIVEKVKP, DRVTMVSLISGAANNGELSHGRWVHGLVIRLQLKG, DAFLSSALIDMYCKCGIIERAFMVFKTATEK, DVALWTSMITGLAFHGNGQQALQLFGRMQEEGVTP, NNVTLLAVLTACSHSGLVEEGLHVFNHMKDK, and ETEHYGSLVDLLCRAGRVEEAKDIVQKKMPMRPSQS. The interval 540–615 is type E motif; that stretch reads MWGSILSACR…TAGYSSVVGV (76 aa). The segment at 616–647 is type E(+) motif; sequence EGLHRFVAAEKQNHPRWTEIKRILQHLYNEMK.

It belongs to the PPR family. PCMP-E subfamily.

It localises to the mitochondrion. This Arabidopsis thaliana (Mouse-ear cress) protein is Pentatricopeptide repeat-containing protein At3g04750, mitochondrial (PCMP-E81).